Here is a 205-residue protein sequence, read N- to C-terminus: Protein N-terminal glutamine amidohydrolase (205 aa).

Catalysis depends on residues Cys-20, His-74, and Asp-90.

This sequence belongs to the NTAQ1 family. As to quaternary structure, monomer.

It carries out the reaction N-terminal L-glutaminyl-[protein] + H2O = N-terminal L-glutamyl-[protein] + NH4(+). Its function is as follows. Mediates the side-chain deamidation of N-terminal glutamine residues to glutamate, an important step in N-end rule pathway of protein degradation. Conversion of the resulting N-terminal glutamine to glutamate renders the protein susceptible to arginylation, polyubiquitination and degradation as specified by the N-end rule. Does not act on substrates with internal or C-terminal glutamine and does not act on non-glutamine residues in any position. This chain is Protein N-terminal glutamine amidohydrolase (tun), found in Drosophila erecta (Fruit fly).